The chain runs to 962 residues: Putative RNA Helicase B962L (962 aa).

The region spanning 43–229 (IPTSLADRVL…FGIGKENIIL (187 aa)) is the Helicase ATP-binding domain. 56 to 63 (SRTGSGKS) provides a ligand contact to ATP. Positions 167-170 (DEAH) match the DEAH box motif. Positions 253–459 (ACETALTIHK…TIKKNKEGVF (207 aa)) constitute a Helicase C-terminal domain. A helical transmembrane segment spans residues 521–541 (GYFWQAAISDIATILAVVSVA).

The protein belongs to the DEAD box helicase family. DEAH subfamily.

It localises to the host membrane. The protein localises to the virion. The enzyme catalyses ATP + H2O = ADP + phosphate + H(+). This chain is Putative RNA Helicase B962L, found in African swine fever virus (isolate Tick/South Africa/Pretoriuskop Pr4/1996) (ASFV).